The following is a 367-amino-acid chain: MNQDNCRIKVNLKNNPYEVVVGSEILYTIGEELLRINIRTGEKILIVTNPDVSKPYSRRFITSLKEAGYDANLLILEAGENKKNYESIALIHNAAYEHQLDRGSLIIALGGGVIGDMAGFAAATWLRGIDFVQVPTTLLAMVDASVGGKTGVNHPKGKNLIGAFHQPKLVLIDINTLKTLPQREFRSGMAEIIKYGVIKDLELFNKLENEEDLSNIYSIKECVLLELIKISVSIKARIVEKDEKESGLRAILNYGHTFGHVIETLCGYGHWLHGEAVSMGMVLIGQLALRKNLWNVDDALRQEKLLTKAGLPISWPKINNEDVLRTLKGDKKVDKGNIRLIVPLGIGMVEILNDVSENEIKSLLESI.

NAD(+) contacts are provided by residues 112–116 (GVIGD), 136–137 (TT), lysine 149, lysine 158, and 176–179 (TLKT). Positions 191, 256, and 273 each coordinate Zn(2+).

This sequence belongs to the sugar phosphate cyclases superfamily. Dehydroquinate synthase family. NAD(+) is required as a cofactor. The cofactor is Co(2+). Requires Zn(2+) as cofactor.

The protein localises to the cytoplasm. It carries out the reaction 7-phospho-2-dehydro-3-deoxy-D-arabino-heptonate = 3-dehydroquinate + phosphate. It participates in metabolic intermediate biosynthesis; chorismate biosynthesis; chorismate from D-erythrose 4-phosphate and phosphoenolpyruvate: step 2/7. In terms of biological role, catalyzes the conversion of 3-deoxy-D-arabino-heptulosonate 7-phosphate (DAHP) to dehydroquinate (DHQ). This chain is 3-dehydroquinate synthase, found in Prochlorococcus marinus (strain SARG / CCMP1375 / SS120).